Reading from the N-terminus, the 1134-residue chain is Early transcription factor large subunit homolog (1134 aa).

The 301-residue stretch at 52 to 352 (KGGRAFFPCD…PNGQPLQRQQ (301 aa)) folds into the Helicase ATP-binding domain. Residue 99-106 (WQTGTGKS) coordinates ATP. Residues 281–284 (DEIH) carry the DEAH box motif. Residues 524–725 (MMKDILSIIR…EGDKALRKHA (202 aa)) enclose the Helicase C-terminal domain.

The protein belongs to the DEAD box helicase family. DEAH subfamily.

It localises to the virion. It catalyses the reaction ATP + H2O = ADP + phosphate + H(+). Putative initation factor. The sequence is that of Early transcription factor large subunit homolog from African swine fever virus (isolate Pig/Kenya/KEN-50/1950) (ASFV).